Here is a 347-residue protein sequence, read N- to C-terminus: Isopentenyl-diphosphate delta-isomerase (347 aa).

Residue Arg9–Lys10 participates in substrate binding. FMN is bound by residues Ser67, Ser68–Thr70, Ser98, and Asn127. Ser98–Arg100 lines the substrate pocket. Residue Gln162 participates in substrate binding. Glu163 serves as a coordination point for Mg(2+). Residues Lys194, Thr224, Gly274–Lys276, and Ala295–Ala296 each bind FMN.

It belongs to the IPP isomerase type 2 family. Homooctamer. Dimer of tetramers. The cofactor is FMN. NADPH serves as cofactor. Requires Mg(2+) as cofactor.

The protein resides in the cytoplasm. It carries out the reaction isopentenyl diphosphate = dimethylallyl diphosphate. In terms of biological role, involved in the biosynthesis of isoprenoids. Catalyzes the 1,3-allylic rearrangement of the homoallylic substrate isopentenyl (IPP) to its allylic isomer, dimethylallyl diphosphate (DMAPP). In Pseudescherichia vulneris (Escherichia vulneris), this protein is Isopentenyl-diphosphate delta-isomerase.